A 382-amino-acid chain; its full sequence is tRNA-specific 2-thiouridylase MnmA (382 aa).

ATP-binding positions include 18–25 and Leu-44; that span reads AMSGGVDS. The active-site Nucleophile is the Cys-112. The cysteines at positions 112 and 209 are disulfide-linked. Gly-136 is an ATP binding site. The interaction with tRNA stretch occupies residues 159-161; the sequence is RDQ. Catalysis depends on Cys-209, which acts as the Cysteine persulfide intermediate.

This sequence belongs to the MnmA/TRMU family.

Its subcellular location is the cytoplasm. The catalysed reaction is S-sulfanyl-L-cysteinyl-[protein] + uridine(34) in tRNA + AH2 + ATP = 2-thiouridine(34) in tRNA + L-cysteinyl-[protein] + A + AMP + diphosphate + H(+). In terms of biological role, catalyzes the 2-thiolation of uridine at the wobble position (U34) of tRNA, leading to the formation of s(2)U34. The polypeptide is tRNA-specific 2-thiouridylase MnmA (Methylobacterium nodulans (strain LMG 21967 / CNCM I-2342 / ORS 2060)).